We begin with the raw amino-acid sequence, 90 residues long: Probable Fe(2+)-trafficking protein (90 aa).

The protein belongs to the Fe(2+)-trafficking protein family. Monomer.

Its function is as follows. Could be a mediator in iron transactions between iron acquisition and iron-requiring processes, such as synthesis and/or repair of Fe-S clusters in biosynthetic enzymes. The polypeptide is Probable Fe(2+)-trafficking protein (Yersinia pestis bv. Antiqua (strain Antiqua)).